We begin with the raw amino-acid sequence, 309 residues long: MKDWLFRIATCSIMTFSSLAAAQAEPLDVVATFSIIGDFAAKVGGDRIRLNVLVGPDSDTHVYEPRPADAIALAGADVVLTNGLEFEGFLTRLIAASGTDAAVATLTDGVETMEEPGGGHYHYIDGKAVFHAGAHDPHAWQAVPNAKVYVQNIAAAFCAADAEGCAAYQANAARYIGELDALDTEIRAAIAALPQDRRTVVVAHNAFRYFEAAYGVHFLSPQGVSTESEAAAADVAGLIREIRARNASAIFAENISDTRLLEQIAREAGLPLAGTLYSDALSGPDGPASNYIAMMRHNAGAIAAALAAR.

The first 24 residues, 1 to 24 (MKDWLFRIATCSIMTFSSLAAAQA), serve as a signal peptide directing secretion. His-61 is a Zn(2+) binding site. Residues 117–132 (GGGHYHYIDGKAVFHA) are D-loop. Residue His-138 participates in Zn(2+) binding. Cys-158 and Cys-165 are joined by a disulfide. Zn(2+) is bound at residue His-204. A Z-loop region spans residues 222-229 (QGVSTESE). Asp-279 is a Zn(2+) binding site.

It belongs to the bacterial solute-binding protein 9 family. In terms of assembly, monomer.

The protein localises to the periplasm. Its function is as follows. Part of the ATP-binding cassette (ABC) transport system AztABCD involved in zinc import. Binds zinc with high affinity and specificity and delivers it to the membrane permease for translocation into the cytoplasm. The protein is High-affinity zinc uptake system protein AztC of Paracoccus denitrificans (strain Pd 1222).